A 166-amino-acid polypeptide reads, in one-letter code: AP-3 complex subunit sigma (166 aa).

Belongs to the adaptor complexes small subunit family. Adaptor protein complex 3 (AP-3) is a heterotetramer composed of two large adaptins (delta-type subunit and beta-type subunit), a medium adaptin (mu-type subunit) and a small adaptin (sigma-type subunit).

The protein resides in the cytoplasm. Its subcellular location is the golgi apparatus. It localises to the cytoplasmic vesicle membrane. Functionally, part of the AP-3 complex, an adaptor-related complex which seems to be clathrin-associated. The complex is associated with the Golgi region as well as more peripheral structures. It facilitates the budding of vesicles from the Golgi membrane and may be directly involved in trafficking to the vacuole. It also function in maintaining the identity of lytic vacuoles and in regulating the transition between storage and lytic vacuoles. In Arabidopsis thaliana (Mouse-ear cress), this protein is AP-3 complex subunit sigma.